A 780-amino-acid chain; its full sequence is Copper-exporting P-type ATPase (780 aa).

Residues 2-67 enclose the HMA domain; the sequence is QRIQLNITGM…AVRRAALCTD (66 aa). C13 and C16 together coordinate Cu(+). Helical transmembrane passes span 89–109, 114–134, 153–173, 185–205, 348–368, and 374–394; these read LAVA…FAVL, FPGW…WAAW, TLIS…VFGH, ALLG…VFVL, VFVP…LIAG, and VFSA…GLAT. D430 acts as the 4-aspartylphosphate intermediate in catalysis. 2 helical membrane-spanning segments follow: residues 680–698 and 704–722; these read FNMV…IAAA and LVAG…SNSL.

The protein belongs to the cation transport ATPase (P-type) (TC 3.A.3) family. Type IB subfamily.

The protein resides in the cell membrane. The enzyme catalyses Cu(+)(in) + ATP + H2O = Cu(+)(out) + ADP + phosphate + H(+). Involved in copper export. The polypeptide is Copper-exporting P-type ATPase (ctpA) (Mycobacterium leprae (strain TN)).